Here is a 339-residue protein sequence, read N- to C-terminus: D-erythrose-4-phosphate dehydrogenase (339 aa).

11-12 (RI) contributes to the NAD(+) binding site. Residues 158-160 (SCT), Arg-204, 217-218 (TK), and Arg-240 each bind substrate. Cys-159 (nucleophile) is an active-site residue. Position 322 (Asn-322) interacts with NAD(+).

It belongs to the glyceraldehyde-3-phosphate dehydrogenase family. Epd subfamily. As to quaternary structure, homotetramer.

Its subcellular location is the cytoplasm. It catalyses the reaction D-erythrose 4-phosphate + NAD(+) + H2O = 4-phospho-D-erythronate + NADH + 2 H(+). It participates in cofactor biosynthesis; pyridoxine 5'-phosphate biosynthesis; pyridoxine 5'-phosphate from D-erythrose 4-phosphate: step 1/5. Catalyzes the NAD-dependent conversion of D-erythrose 4-phosphate to 4-phosphoerythronate. The chain is D-erythrose-4-phosphate dehydrogenase from Aliivibrio fischeri (strain ATCC 700601 / ES114) (Vibrio fischeri).